A 626-amino-acid polypeptide reads, in one-letter code: Kinesin-like protein Klp59C (626 aa).

Residues 1–183 (MDKLSIEQKI…VRSGTTNERI (183 aa)) form a globular region. A disordered region spans residues 68 to 155 (CSGGNAASAN…GKNEDPGNPN (88 aa)). The segment covering 72–96 (NAASANQTASISPRSMKQRIATGSL) has biased composition (polar residues). Low complexity predominate over residues 101–112 (ATAPPRQQTAPP). The segment covering 113–150 (VREDEVVHQAERMRKERERRREAQARTRLDREQGKNED) has biased composition (basic and acidic residues). A coiled-coil region spans residues 115-150 (EDEVVHQAERMRKERERRREAQARTRLDREQGKNED). The Kinesin motor domain occupies 187–521 (QIMVCVRKRP…LRYADRVKEL (335 aa)). 277–284 (GQTGSGKT) is an ATP binding site. The disordered stretch occupies residues 557-608 (ASSTSMPGGGNQAQQHTNTANDLNRSQKPTSKPTYPTSGQQLVQRKGSSQRE).

Belongs to the TRAFAC class myosin-kinesin ATPase superfamily. Kinesin family. MCAK/KIF2 subfamily.

The protein resides in the chromosome. It is found in the centromere. Its subcellular location is the kinetochore. It localises to the cytoplasm. The protein localises to the cytoskeleton. The protein resides in the spindle pole. Required during anaphase to drive sister chromatid separation to actively depolymerize kinetochore microtubules at their kinetochore-associated plus ends, thereby contributing to chromatid mobility through a 'Pac-man' mechanism. This Drosophila melanogaster (Fruit fly) protein is Kinesin-like protein Klp59C (Klp59C).